A 224-amino-acid chain; its full sequence is Coiled-coil domain-containing protein 43 (224 aa).

A Glycyl lysine isopeptide (Lys-Gly) (interchain with G-Cter in SUMO1) cross-link involves residue lysine 95. Coiled coils occupy residues serine 121–alanine 145 and arginine 177–glutamine 218. Over residues valine 138–aspartate 149 the composition is skewed to acidic residues. Disordered regions lie at residues valine 138–asparagine 157 and alanine 176–arginine 224. Threonine 139 bears the Phosphothreonine mark. Over residues alanine 176–glutamate 211 the composition is skewed to basic and acidic residues. Basic residues predominate over residues lysine 212–arginine 224.

The protein belongs to the CCDC43 family.

The polypeptide is Coiled-coil domain-containing protein 43 (CCDC43) (Homo sapiens (Human)).